The following is a 230-amino-acid chain: Cytochrome c oxidase subunit 2 (230 aa).

Over 1–14 the chain is Mitochondrial intermembrane; sequence MAHPAQLGFQDAAS. A helical transmembrane segment spans residues 15 to 45; the sequence is PVMEELLCFHDHALMIVFLISTLVLYIIIAM. The Mitochondrial matrix segment spans residues 46-59; that stretch reads VSTKLTNKFILDSQ. A helical transmembrane segment spans residues 60 to 87; that stretch reads EIEIVWTVLPAIILILIALPSLRILYLM. At 88–230 the chain is on the mitochondrial intermembrane side; the sequence is DEINDPHVTI…NWSSAMLEDA (143 aa). His-161, Cys-196, Glu-198, Cys-200, His-204, and Met-207 together coordinate Cu cation. Residue Glu-198 coordinates Mg(2+).

It belongs to the cytochrome c oxidase subunit 2 family. In terms of assembly, component of the cytochrome c oxidase (complex IV, CIV), a multisubunit enzyme composed of 14 subunits. The complex is composed of a catalytic core of 3 subunits MT-CO1, MT-CO2 and MT-CO3, encoded in the mitochondrial DNA, and 11 supernumerary subunits COX4I, COX5A, COX5B, COX6A, COX6B, COX6C, COX7A, COX7B, COX7C, COX8 and NDUFA4, which are encoded in the nuclear genome. The complex exists as a monomer or a dimer and forms supercomplexes (SCs) in the inner mitochondrial membrane with NADH-ubiquinone oxidoreductase (complex I, CI) and ubiquinol-cytochrome c oxidoreductase (cytochrome b-c1 complex, complex III, CIII), resulting in different assemblies (supercomplex SCI(1)III(2)IV(1) and megacomplex MCI(2)III(2)IV(2)). Found in a complex with TMEM177, COA6, COX18, COX20, SCO1 and SCO2. Interacts with TMEM177 in a COX20-dependent manner. Interacts with COX20. Interacts with COX16. Requires Cu cation as cofactor.

The protein resides in the mitochondrion inner membrane. The catalysed reaction is 4 Fe(II)-[cytochrome c] + O2 + 8 H(+)(in) = 4 Fe(III)-[cytochrome c] + 2 H2O + 4 H(+)(out). Component of the cytochrome c oxidase, the last enzyme in the mitochondrial electron transport chain which drives oxidative phosphorylation. The respiratory chain contains 3 multisubunit complexes succinate dehydrogenase (complex II, CII), ubiquinol-cytochrome c oxidoreductase (cytochrome b-c1 complex, complex III, CIII) and cytochrome c oxidase (complex IV, CIV), that cooperate to transfer electrons derived from NADH and succinate to molecular oxygen, creating an electrochemical gradient over the inner membrane that drives transmembrane transport and the ATP synthase. Cytochrome c oxidase is the component of the respiratory chain that catalyzes the reduction of oxygen to water. Electrons originating from reduced cytochrome c in the intermembrane space (IMS) are transferred via the dinuclear copper A center (CU(A)) of subunit 2 and heme A of subunit 1 to the active site in subunit 1, a binuclear center (BNC) formed by heme A3 and copper B (CU(B)). The BNC reduces molecular oxygen to 2 water molecules using 4 electrons from cytochrome c in the IMS and 4 protons from the mitochondrial matrix. The polypeptide is Cytochrome c oxidase subunit 2 (mt-co2) (Danio rerio (Zebrafish)).